The primary structure comprises 720 residues: Phenylalanine--tRNA ligase beta subunit, chloroplastic (720 aa).

Residues 319 to 404 (NSTLNIDISL…RVYGYNQFQS (86 aa)) form the B5 domain. The Mg(2+) site is built by aspartate 382, aspartate 388, glutamate 391, and glutamate 392. One can recognise an FDX-ACB domain in the interval 626-719 (SKYPCITRDL…IIKKLNLEIR (94 aa)).

This sequence belongs to the phenylalanyl-tRNA synthetase beta subunit family. Type 1 subfamily. As to quaternary structure, tetramer of two alpha and two beta subunits. Mg(2+) serves as cofactor.

Its subcellular location is the plastid. It localises to the chloroplast. It carries out the reaction tRNA(Phe) + L-phenylalanine + ATP = L-phenylalanyl-tRNA(Phe) + AMP + diphosphate + H(+). The polypeptide is Phenylalanine--tRNA ligase beta subunit, chloroplastic (pheT) (Porphyra purpurea (Red seaweed)).